Reading from the N-terminus, the 316-residue chain is Olfactory receptor 8J1 (316 aa).

Residues 1 to 25 are Extracellular-facing; the sequence is MAPENFTRVTEFILTGVSSCPELQI. Asn5 carries N-linked (GlcNAc...) asparagine glycosylation. Residues 26 to 46 traverse the membrane as a helical segment; the sequence is PLFLVFLVLYGLTMAGNLGII. Residues 47–54 are Cytoplasmic-facing; sequence TLTSVDSR. A helical transmembrane segment spans residues 55–75; it reads LQTPMYFFLQHLALINLGNST. Residues 76–99 are Extracellular-facing; that stretch reads VIAPKMLINFLVKKKTTSFYECAT. A disulfide bridge links Cys97 with Cys189. The helical transmembrane segment at 100-120 threads the bilayer; sequence QLGGFLFFIVSEVIMLALMAY. The Cytoplasmic portion of the chain corresponds to 121 to 139; sequence DRYVAICNPLLYMVVVSRR. A helical transmembrane segment spans residues 140–160; that stretch reads LCLLLVSLTYLYGFSTAIVVS. The Extracellular segment spans residues 161–197; the sequence is SYVFSVSYCSSNIINHFYCDNVPLLALSCSDTYLPET. The chain crosses the membrane as a helical span at residues 198 to 217; that stretch reads VVFISAATNVVGSLIIVLVS. The Cytoplasmic segment spans residues 218-237; it reads YFNIVLSILKICSSEGRKKA. The chain crosses the membrane as a helical span at residues 238 to 258; it reads FSTCASHMMAVTIFYGTLLFM. At 259 to 272 the chain is on the extracellular side; sequence YVQPRSNHSLDTDD. A helical membrane pass occupies residues 273–293; it reads KMASVFYTLVIPMLNPLIYSL. Residues 294–316 are Cytoplasmic-facing; sequence RNKDVKTALQRFMTNLCYSFKTM.

It belongs to the G-protein coupled receptor 1 family.

The protein localises to the cell membrane. Odorant receptor. This chain is Olfactory receptor 8J1 (OR8J1), found in Homo sapiens (Human).